The primary structure comprises 1364 residues: Pleckstrin homology domain-containing family H member 1 (1364 aa).

A coiled-coil region spans residues 28–169; sequence FRLQASKIRE…VGSLQDALEA (142 aa). 5 disordered regions span residues 184–266, 296–321, 356–395, 487–529, and 546–568; these read GAAE…SPPH, GTKT…PGTP, LHPS…ESPK, PFMD…IKRG, and DACS…SSYS. Over residues 237–246 the composition is skewed to polar residues; that stretch reads EDSSSSTVHS. A compositionally biased stretch (basic and acidic residues) spans 364–379; the sequence is LESRARSREEPEKMEM. Residues 509 to 520 show a composition bias toward polar residues; that stretch reads VPSSESRKTSGL. PH domains are found at residues 578 to 672 and 687 to 796; these read SLEK…SLLK and KPTV…VAAG. A Phosphoserine modification is found at Ser-745. The region spanning 832 to 986 is the MyTH4 domain; the sequence is YSKDGLYASL…PSRMEVVSIL (155 aa). The 337-residue stretch at 997–1333 folds into the FERM domain; it reads FSIPVHFTNG…NHCTTTVNPP (337 aa).

This is Pleckstrin homology domain-containing family H member 1 (PLEKHH1) from Homo sapiens (Human).